A 465-amino-acid polypeptide reads, in one-letter code: MFIYDTKLKQKVPFEPLVEKKANIYVCGPTVYDDAHLGHARSAIAFDLLRRTLELSGYEVVLVRNFTDIDDKIINKALKENKSIQELSSIYIESYTRDLNALNVKKPSLEPKASEYLDAMVGMIETLLEKNIAYQISNGDIYLDTSKDKDYGSLSVHNSSIEFGRIGLVQEKRLEQDFVLWKSYKGDNDVGFDSPLGKGRPGWHIECSSMIFKTLALTDTPYQIDIHAGGADLLFPHHENEACQTRCAFGVELAKYWMHNGFVNINNEKMSKSLGNSFFIKDALKNYDGEILRNYLLGVHYRSVLNFNEEDLLMSKKRLDKIYRLKQRVLGTLGGINPNFKKEILECMQDDLNISKALSVLESMLSSTNEKLDQNPKNKALKGEILANLKFIEELLGIGFKDPVEYFQLGVSGSEKQEIENKIEERKRAKEQKDFLKADNIREELLKQKIALMDTPQGTIWEKFF.

Cys27 contributes to the Zn(2+) binding site. The 'HIGH' region signature appears at 29–39 (PTVYDDAHLGH). Zn(2+) contacts are provided by Cys207, His237, and Glu241. The 'KMSKS' region motif lies at 269–273 (KMSKS). Lys272 contributes to the ATP binding site.

This sequence belongs to the class-I aminoacyl-tRNA synthetase family. Monomer. Zn(2+) is required as a cofactor.

The protein localises to the cytoplasm. The catalysed reaction is tRNA(Cys) + L-cysteine + ATP = L-cysteinyl-tRNA(Cys) + AMP + diphosphate. The chain is Cysteine--tRNA ligase from Helicobacter pylori (strain Shi470).